The primary structure comprises 108 residues: NADH dehydrogenase [ubiquinone] 1 alpha subcomplex subunit 8-A (108 aa).

2 CHCH domains span residues 28-69 (GIRC…LKDL) and 70-108 (HQRCPKEMDAYVGCMYYYTNEFELCRKEQEAFEKVCPLK). Short sequence motifs (cx9C motif) lie at residues 31–41 (CMPENMAFLKC), 51–61 (CLEKGRDVTRC), and 73–83 (CPKEMDAYVGC). Disulfide bonds link C31-C61, C41-C51, C73-C105, and C83-C94. Positions 94–105 (CRKEQEAFEKVC) match the Cx10C motif motif.

Belongs to the complex I NDUFA8 subunit family. Complex I is composed of at least 49 different subunits.

The protein localises to the mitochondrion. The protein resides in the mitochondrion intermembrane space. Accessory subunit of the mitochondrial membrane respiratory chain NADH dehydrogenase (Complex I), that is believed not to be involved in catalysis. Complex I functions in the transfer of electrons from NADH to the respiratory chain. The immediate electron acceptor for the enzyme is believed to be ubiquinone. This Arabidopsis thaliana (Mouse-ear cress) protein is NADH dehydrogenase [ubiquinone] 1 alpha subcomplex subunit 8-A.